The primary structure comprises 529 residues: Probable bifunctional tRNA threonylcarbamoyladenosine biosynthesis protein (529 aa).

A kae1 region spans residues 1–324 (MIVLGLEGTA…FRIDEVDAPW (324 aa)). Positions 107, 111, and 128 each coordinate Fe cation. Residues 128-132 (YVSGG), D160, G173, E177, and N257 each bind L-threonylcarbamoyladenylate. D285 provides a ligand contact to Fe cation. The Protein kinase domain maps to 329-529 (SRKDYGKAGA…SAIRRRHRYV (201 aa)). ATP contacts are provided by residues 335-342 (KAGAESRI) and K355. The active-site Proton acceptor; for kinase activity is the D447.

The protein in the N-terminal section; belongs to the KAE1 / TsaD family. This sequence in the C-terminal section; belongs to the protein kinase superfamily. Tyr protein kinase family. BUD32 subfamily. Component of the KEOPS complex that consists of Kae1, Bud32, Cgi121 and Pcc1; the whole complex dimerizes. Fe(2+) serves as cofactor.

It localises to the cytoplasm. It carries out the reaction L-seryl-[protein] + ATP = O-phospho-L-seryl-[protein] + ADP + H(+). The enzyme catalyses L-threonyl-[protein] + ATP = O-phospho-L-threonyl-[protein] + ADP + H(+). The catalysed reaction is L-threonylcarbamoyladenylate + adenosine(37) in tRNA = N(6)-L-threonylcarbamoyladenosine(37) in tRNA + AMP + H(+). Functionally, required for the formation of a threonylcarbamoyl group on adenosine at position 37 (t(6)A37) in tRNAs that read codons beginning with adenine. Is a component of the KEOPS complex that is probably involved in the transfer of the threonylcarbamoyl moiety of threonylcarbamoyl-AMP (TC-AMP) to the N6 group of A37. The Kae1 domain likely plays a direct catalytic role in this reaction. The Bud32 domain probably displays kinase activity that regulates Kae1 function. In Thermoplasma acidophilum (strain ATCC 25905 / DSM 1728 / JCM 9062 / NBRC 15155 / AMRC-C165), this protein is Probable bifunctional tRNA threonylcarbamoyladenosine biosynthesis protein.